The primary structure comprises 147 residues: Deoxyuridine 5'-triphosphate nucleotidohydrolase (147 aa).

Arginine 24 is a Mg(2+) binding site. DUTP-binding positions include 68–70 (PRS), 82–85 (GVID), tyrosine 88, glycine 93, isoleucine 95, and arginine 111.

The protein belongs to the dUTPase family. The cofactor is Mg(2+).

It carries out the reaction dUTP + H2O = dUMP + diphosphate + H(+). This enzyme is involved in nucleotide metabolism: it produces dUMP, the immediate precursor of thymidine nucleotides and it decreases the intracellular concentration of dUTP so that uracil cannot be incorporated into DNA. This chain is Deoxyuridine 5'-triphosphate nucleotidohydrolase (OPG046), found in Oryctolagus cuniculus (Rabbit).